Reading from the N-terminus, the 226-residue chain is Leucyl/phenylalanyl-tRNA--protein transferase (226 aa).

Belongs to the L/F-transferase family.

The protein resides in the cytoplasm. It catalyses the reaction N-terminal L-lysyl-[protein] + L-leucyl-tRNA(Leu) = N-terminal L-leucyl-L-lysyl-[protein] + tRNA(Leu) + H(+). The enzyme catalyses N-terminal L-arginyl-[protein] + L-leucyl-tRNA(Leu) = N-terminal L-leucyl-L-arginyl-[protein] + tRNA(Leu) + H(+). The catalysed reaction is L-phenylalanyl-tRNA(Phe) + an N-terminal L-alpha-aminoacyl-[protein] = an N-terminal L-phenylalanyl-L-alpha-aminoacyl-[protein] + tRNA(Phe). Functions in the N-end rule pathway of protein degradation where it conjugates Leu, Phe and, less efficiently, Met from aminoacyl-tRNAs to the N-termini of proteins containing an N-terminal arginine or lysine. The sequence is that of Leucyl/phenylalanyl-tRNA--protein transferase from Pseudomonas paraeruginosa (strain DSM 24068 / PA7) (Pseudomonas aeruginosa (strain PA7)).